Here is a 126-residue protein sequence, read N- to C-terminus: Ribosome-binding factor A (126 aa).

The protein belongs to the RbfA family. As to quaternary structure, monomer. Binds 30S ribosomal subunits, but not 50S ribosomal subunits or 70S ribosomes.

Its subcellular location is the cytoplasm. One of several proteins that assist in the late maturation steps of the functional core of the 30S ribosomal subunit. Associates with free 30S ribosomal subunits (but not with 30S subunits that are part of 70S ribosomes or polysomes). Required for efficient processing of 16S rRNA. May interact with the 5'-terminal helix region of 16S rRNA. The protein is Ribosome-binding factor A of Histophilus somni (strain 129Pt) (Haemophilus somnus).